The sequence spans 256 residues: Thiazole synthase (256 aa).

Residue lysine 95 is the Schiff-base intermediate with DXP of the active site. 1-deoxy-D-xylulose 5-phosphate contacts are provided by residues glycine 156, 182-183 (AG), and 204-205 (NT).

This sequence belongs to the ThiG family. Homotetramer. Forms heterodimers with either ThiH or ThiS.

The protein resides in the cytoplasm. It catalyses the reaction [ThiS sulfur-carrier protein]-C-terminal-Gly-aminoethanethioate + 2-iminoacetate + 1-deoxy-D-xylulose 5-phosphate = [ThiS sulfur-carrier protein]-C-terminal Gly-Gly + 2-[(2R,5Z)-2-carboxy-4-methylthiazol-5(2H)-ylidene]ethyl phosphate + 2 H2O + H(+). It participates in cofactor biosynthesis; thiamine diphosphate biosynthesis. Catalyzes the rearrangement of 1-deoxy-D-xylulose 5-phosphate (DXP) to produce the thiazole phosphate moiety of thiamine. Sulfur is provided by the thiocarboxylate moiety of the carrier protein ThiS. In vitro, sulfur can be provided by H(2)S. The polypeptide is Thiazole synthase (Alteromonas mediterranea (strain DSM 17117 / CIP 110805 / LMG 28347 / Deep ecotype)).